The chain runs to 494 residues: Neuronal acetylcholine receptor subunit alpha-6 (494 aa).

Positions M1–C31 are cleaved as a signal peptide. Topologically, residues E32–P240 are extracellular. Residues N54 and N171 are each glycosylated (N-linked (GlcNAc...) asparagine). A disulfide bridge links C158 with C172. 3 consecutive transmembrane segments (helical) span residues M241–P265, V272–T290, and Y306–I327. Residues H328–R468 are Cytoplasmic-facing. The tract at residues K364–K390 is disordered. Over residues I366–K390 the composition is skewed to basic residues. The chain crosses the membrane as a helical span at residues V469–P489.

This sequence belongs to the ligand-gated ion channel (TC 1.A.9) family. Acetylcholine receptor (TC 1.A.9.1) subfamily. Alpha-6/CHRNA6 sub-subfamily. As to quaternary structure, neuronal AChR is composed of two different types of subunits: alpha and non-alpha (beta). CHRNA6/alpha-6 subunit can be combined to CHRNB2/beta-2, CHRNA4/alpha-4 and CHRNB3/beta-3 to give rise to functional receptors. Heteropentamers containing CHRNB3 have an stoichiometry of (CHRNA6:CHRNB2)2:CHRNB3. Interacts with LYPD6.

The protein localises to the synaptic cell membrane. It catalyses the reaction K(+)(in) = K(+)(out). The enzyme catalyses Na(+)(in) = Na(+)(out). The catalysed reaction is Ca(2+)(in) = Ca(2+)(out). Its activity is regulated as follows. Activated by a myriad of ligands such as acetylcholine, cytisine and nicotine. CHRNA6 nAChR activity is inhibited by the antagonists alpha-conotoxin MII and PIA, a small disulfide-constrained peptides from cone snails. In terms of biological role, component of neuronal acetylcholine receptors (nAChRs) that function as pentameric, ligand-gated cation channels with high calcium permeability among other activities. nAChRs are excitatory neurotrasnmitter receptors formed by a collection of nAChR subunits known to mediate synaptic transmission in the nervous system and the neuromuscular junction. Each nAchR subunit confers differential attributes to channel properties, including activation, deactivation and desensitization kinetics, pH sensitivity, cation permeability, and binding to allosteric modulators. CHRNA6 forms pentameric channels with CHRNB2 and CHRNA4 that exhibit high sensitivity to ACh and nicotine and are predominantly expressed in only a few brain areas, including dopaminergic neurons, norepirephrine neurons and cells of the visual system. nAChrs containing CHRNA6 subunits mediate endogenous cholinergic modulation of dopamine and gamma-aminobutyric acid (GABA) release in response to nicotine at nerve terminals. Component of neuronal acetylcholine receptors (nAChRs) that function as pentameric, ligand-gated cation channels with high calcium permeability among other activities. nAChRs are excitatory neurotrasnmitter receptors formed by a collection of nAChR subunits known to mediate synaptic transmission in the nervous system and the neuromuscular junction. Each nAchR subunit confers differential attributes to channel properties, including activation, deactivation and desensitization kinetics, pH sensitivity, cation permeability, and binding to allosteric modulators. CHRNA6 forms pentameric channels with CHRNB2, CHRNB3 and CHRNA4 that exhibit high sensitivity to ACh and nicotine and are predominantly expressed in only a few brain areas, including dopaminergic neurons, norepirephrine neurons and cells of the visual system. nAChrs containing CHRNA6 subunits mediate endogenous cholinergic modulation of dopamine and gamma-aminobutyric acid (GABA) release in response to nicotine at nerve terminals. The sequence is that of Neuronal acetylcholine receptor subunit alpha-6 (CHRNA6) from Gallus gallus (Chicken).